The following is a 167-amino-acid chain: ATP synthase subunit b (167 aa).

The chain crosses the membrane as a helical span at residues 8–28 (AEAEFWVGAGLLIFLGIVFFG).

This sequence belongs to the ATPase B chain family. In terms of assembly, F-type ATPases have 2 components, F(1) - the catalytic core - and F(0) - the membrane proton channel. F(1) has five subunits: alpha(3), beta(3), gamma(1), delta(1), epsilon(1). F(0) has three main subunits: a(1), b(2) and c(10-14). The alpha and beta chains form an alternating ring which encloses part of the gamma chain. F(1) is attached to F(0) by a central stalk formed by the gamma and epsilon chains, while a peripheral stalk is formed by the delta and b chains.

The protein resides in the cell inner membrane. Its function is as follows. F(1)F(0) ATP synthase produces ATP from ADP in the presence of a proton or sodium gradient. F-type ATPases consist of two structural domains, F(1) containing the extramembraneous catalytic core and F(0) containing the membrane proton channel, linked together by a central stalk and a peripheral stalk. During catalysis, ATP synthesis in the catalytic domain of F(1) is coupled via a rotary mechanism of the central stalk subunits to proton translocation. In terms of biological role, component of the F(0) channel, it forms part of the peripheral stalk, linking F(1) to F(0). The sequence is that of ATP synthase subunit b from Phenylobacterium zucineum (strain HLK1).